We begin with the raw amino-acid sequence, 229 residues long: 7-cyano-7-deazaguanine synthase (229 aa).

9 to 19 (LSGGLDSTTVL) is an ATP binding site. 4 residues coordinate Zn(2+): cysteine 192, cysteine 202, cysteine 205, and cysteine 208.

It belongs to the QueC family. Zn(2+) serves as cofactor.

It carries out the reaction 7-carboxy-7-deazaguanine + NH4(+) + ATP = 7-cyano-7-deazaguanine + ADP + phosphate + H2O + H(+). Its pathway is purine metabolism; 7-cyano-7-deazaguanine biosynthesis. Functionally, catalyzes the ATP-dependent conversion of 7-carboxy-7-deazaguanine (CDG) to 7-cyano-7-deazaguanine (preQ(0)). The sequence is that of 7-cyano-7-deazaguanine synthase from Kineococcus radiotolerans (strain ATCC BAA-149 / DSM 14245 / SRS30216).